Reading from the N-terminus, the 115-residue chain is Anamorsin homolog 2 (115 aa).

Residues 30 to 115 (VKEATKGEDC…KVKLNLTDDI (86 aa)) are disordered. [2Fe-2S] cluster-binding residues include cysteine 39, cysteine 46, cysteine 49, and cysteine 51. The tract at residues 39-51 (CTTRRRACKNCTC) is fe-S binding site A. Cysteine 77, cysteine 80, cysteine 88, and cysteine 91 together coordinate [4Fe-4S] cluster. Short sequence motifs (cx2C motif) lie at residues 77–80 (CGNC) and 88–91 (CATC). The segment at 77–91 (CGNCAKGDAFRCATC) is fe-S binding site B.

This sequence belongs to the anamorsin family. Monomer. [2Fe-2S] cluster is required as a cofactor. It depends on [4Fe-4S] cluster as a cofactor.

Its subcellular location is the cytoplasm. It is found in the mitochondrion intermembrane space. Its function is as follows. Component of the cytosolic iron-sulfur (Fe-S) protein assembly (CIA) machinery. Required for the maturation of extramitochondrial Fe-S proteins. Part of an electron transfer chain functioning in an early step of cytosolic Fe-S biogenesis, facilitating the de novo assembly of a [4Fe-4S] cluster on the cytosolic Fe-S scaffold complex. Electrons are transferred from NADPH via a FAD- and FMN-containing diflavin oxidoreductase. Together with the diflavin oxidoreductase, also required for the assembly of the diferric tyrosyl radical cofactor of ribonucleotide reductase (RNR), probably by providing electrons for reduction during radical cofactor maturation in the catalytic small subunit. The polypeptide is Anamorsin homolog 2 (Trypanosoma cruzi (strain CL Brener)).